Consider the following 237-residue polypeptide: Homeobox protein Nkx-3.1 (237 aa).

The segment covering 1–14 (MLRVAEPREPRVEA) has biased composition (basic and acidic residues). Disordered stretches follow at residues 1 to 96 (MLRV…EPES) and 108 to 130 (EHNP…RSRA). Residues 24–34 (PTQSKRLTSFL) show a composition bias toward polar residues. Basic and acidic residues-rich tracts occupy residues 38–47 (ILRDRAERHG) and 57–71 (PDPR…DKAG). The homeobox DNA-binding region spans 125–184 (QKRSRAAFSHTQVIELERKFSHQKYLSAPERAHLAKNLKLTETQVKIWFQNRRYKTKRKQ).

The protein belongs to the NK-3 homeobox family. As to quaternary structure, interacts with serum response factor (SRF). Interacts with SPDEF. Interacts with WDR77. Interacts with TOPORS which polyubiquitinates NKX3-1 and induces its proteasomal degradation. Interacts with FEM1B. Post-translationally, ubiquitinated by TOPORS; monoubiquitinated at several residues and also polyubiquitinated on single residues. Expressed mostly in the male urogenital tract, with highest expression in the epithelial cells lining the ducts of anterior, dorsolateral and ventral prostate and in the bulbourethral gland, and much lower in the seminal vesicle and the testis. Expression in the prostate increases during sexual maturation and is drastically reduced following castration. Expressed also in brain (hippocampus and external granular layer of the cerebral cortex), kidney (intralobular arteries), thymus and adrenal and salivary glands.

The protein localises to the nucleus. In terms of biological role, transcription factor, which binds preferentially the consensus sequence 5'-TAAGT[AG]-3' and can behave as a transcriptional repressor. Plays an important role in normal prostate development, regulating proliferation of glandular epithelium and in the formation of ducts in prostate. Acts as a tumor suppressor controlling prostate carcinogenesis, as shown by the ability to suppress growth and tumorigenicity of prostate carcinoma cells. Plays a role in the formation of minor salivary glands (particularly palatine and lingual glands). The protein is Homeobox protein Nkx-3.1 of Mus musculus (Mouse).